The chain runs to 309 residues: DnaJ-like protein MG002 homolog (309 aa).

The 66-residue stretch at methionine 1–phenylalanine 66 folds into the J domain.

The protein is DnaJ-like protein MG002 homolog of Mycoplasma pneumoniae (strain ATCC 29342 / M129 / Subtype 1) (Mycoplasmoides pneumoniae).